The sequence spans 263 residues: Chymotrypsinogen B (263 aa).

An N-terminal signal peptide occupies residues 1–18 (MASLWLLSCFSLVGAAFG). 5 disulfides stabilise this stretch: cysteine 19–cysteine 140, cysteine 60–cysteine 76, cysteine 154–cysteine 219, cysteine 186–cysteine 200, and cysteine 209–cysteine 238. One can recognise a Peptidase S1 domain in the interval 34 to 261 (IVNGEDAVPG…LIPWVQKILA (228 aa)). Histidine 75 acts as the Charge relay system in catalysis. The residue at position 93 (serine 93) is a Phosphoserine. Aspartate 120 acts as the Charge relay system in catalysis. Residue serine 213 is the Charge relay system of the active site.

This sequence belongs to the peptidase S1 family.

Its subcellular location is the secreted. It localises to the extracellular space. It catalyses the reaction Preferential cleavage: Tyr-|-Xaa, Trp-|-Xaa, Phe-|-Xaa, Leu-|-Xaa.. This is Chymotrypsinogen B from Homo sapiens (Human).